The chain runs to 59 residues: Large ribosomal subunit protein uL30 (59 aa).

Belongs to the universal ribosomal protein uL30 family. As to quaternary structure, part of the 50S ribosomal subunit.

This chain is Large ribosomal subunit protein uL30, found in Listeria innocua serovar 6a (strain ATCC BAA-680 / CLIP 11262).